The sequence spans 460 residues: Argininosuccinate lyase (460 aa).

This sequence belongs to the lyase 1 family. Argininosuccinate lyase subfamily.

Its subcellular location is the cytoplasm. The enzyme catalyses 2-(N(omega)-L-arginino)succinate = fumarate + L-arginine. Its pathway is amino-acid biosynthesis; L-arginine biosynthesis; L-arginine from L-ornithine and carbamoyl phosphate: step 3/3. The polypeptide is Argininosuccinate lyase (Lawsonia intracellularis (strain PHE/MN1-00)).